The following is a 136-amino-acid chain: Urease subunit beta (136 aa).

This sequence belongs to the urease beta subunit family. Heterotrimer of UreA (gamma), UreB (beta) and UreC (alpha) subunits. Three heterotrimers associate to form the active enzyme.

Its subcellular location is the cytoplasm. The catalysed reaction is urea + 2 H2O + H(+) = hydrogencarbonate + 2 NH4(+). Its pathway is nitrogen metabolism; urea degradation; CO(2) and NH(3) from urea (urease route): step 1/1. The polypeptide is Urease subunit beta (Staphylococcus aureus (strain Mu3 / ATCC 700698)).